The following is a 157-amino-acid chain: Crossover junction endodeoxyribonuclease RuvC (157 aa).

Residues Asp7, Glu67, and Asp139 contribute to the active site. Residues Asp7, Glu67, and Asp139 each contribute to the Mg(2+) site.

Belongs to the RuvC family. Homodimer which binds Holliday junction (HJ) DNA. The HJ becomes 2-fold symmetrical on binding to RuvC with unstacked arms; it has a different conformation from HJ DNA in complex with RuvA. In the full resolvosome a probable DNA-RuvA(4)-RuvB(12)-RuvC(2) complex forms which resolves the HJ. Mg(2+) is required as a cofactor.

It is found in the cytoplasm. The enzyme catalyses Endonucleolytic cleavage at a junction such as a reciprocal single-stranded crossover between two homologous DNA duplexes (Holliday junction).. Its function is as follows. The RuvA-RuvB-RuvC complex processes Holliday junction (HJ) DNA during genetic recombination and DNA repair. Endonuclease that resolves HJ intermediates. Cleaves cruciform DNA by making single-stranded nicks across the HJ at symmetrical positions within the homologous arms, yielding a 5'-phosphate and a 3'-hydroxyl group; requires a central core of homology in the junction. The consensus cleavage sequence is 5'-(A/T)TT(C/G)-3'. Cleavage occurs on the 3'-side of the TT dinucleotide at the point of strand exchange. HJ branch migration catalyzed by RuvA-RuvB allows RuvC to scan DNA until it finds its consensus sequence, where it cleaves and resolves the cruciform DNA. This is Crossover junction endodeoxyribonuclease RuvC from Prochlorococcus marinus subsp. pastoris (strain CCMP1986 / NIES-2087 / MED4).